A 315-amino-acid chain; its full sequence is DNA-directed RNA polymerase subunit alpha (315 aa).

The alpha N-terminal domain (alpha-NTD) stretch occupies residues 1 to 228 (MIGMEKPKIE…EHLELFISLT (228 aa)). The alpha C-terminal domain (alpha-CTD) stretch occupies residues 245 to 315 (RNKLMEMTIE…FGLSLRQPDD (71 aa)).

It belongs to the RNA polymerase alpha chain family. In terms of assembly, homodimer. The RNAP catalytic core consists of 2 alpha, 1 beta, 1 beta' and 1 omega subunit. When a sigma factor is associated with the core the holoenzyme is formed, which can initiate transcription.

The enzyme catalyses RNA(n) + a ribonucleoside 5'-triphosphate = RNA(n+1) + diphosphate. DNA-dependent RNA polymerase catalyzes the transcription of DNA into RNA using the four ribonucleoside triphosphates as substrates. The protein is DNA-directed RNA polymerase subunit alpha of Symbiobacterium thermophilum (strain DSM 24528 / JCM 14929 / IAM 14863 / T).